A 240-amino-acid polypeptide reads, in one-letter code: Ribonuclease HII (240 aa).

An RNase H type-2 domain is found at 7–215 (RYAIGIDEAG…LKRIAPGWYV (209 aa)). Positions 13, 14, and 112 each coordinate a divalent metal cation.

This sequence belongs to the RNase HII family. The cofactor is Mn(2+). Requires Mg(2+) as cofactor.

The protein localises to the cytoplasm. The enzyme catalyses Endonucleolytic cleavage to 5'-phosphomonoester.. In terms of biological role, endonuclease that specifically degrades the RNA of RNA-DNA hybrids. This chain is Ribonuclease HII, found in Hyperthermus butylicus (strain DSM 5456 / JCM 9403 / PLM1-5).